The following is a 136-amino-acid chain: Nucleoside diphosphate kinase (136 aa).

Residues Lys-10, Phe-58, Arg-86, Thr-92, Arg-104, and Asn-114 each contribute to the ATP site. Residue His-117 is the Pros-phosphohistidine intermediate of the active site.

This sequence belongs to the NDK family. As to quaternary structure, homotetramer. The cofactor is Mg(2+).

It is found in the cytoplasm. The enzyme catalyses a 2'-deoxyribonucleoside 5'-diphosphate + ATP = a 2'-deoxyribonucleoside 5'-triphosphate + ADP. It catalyses the reaction a ribonucleoside 5'-diphosphate + ATP = a ribonucleoside 5'-triphosphate + ADP. Major role in the synthesis of nucleoside triphosphates other than ATP. The ATP gamma phosphate is transferred to the NDP beta phosphate via a ping-pong mechanism, using a phosphorylated active-site intermediate. In Mycobacteroides abscessus (strain ATCC 19977 / DSM 44196 / CCUG 20993 / CIP 104536 / JCM 13569 / NCTC 13031 / TMC 1543 / L948) (Mycobacterium abscessus), this protein is Nucleoside diphosphate kinase.